Here is a 257-residue protein sequence, read N- to C-terminus: tRNA pseudouridine synthase A (257 aa).

Catalysis depends on aspartate 53, which acts as the Nucleophile. Position 111 (tyrosine 111) interacts with substrate.

Belongs to the tRNA pseudouridine synthase TruA family. Homodimer.

It carries out the reaction uridine(38/39/40) in tRNA = pseudouridine(38/39/40) in tRNA. Functionally, formation of pseudouridine at positions 38, 39 and 40 in the anticodon stem and loop of transfer RNAs. The chain is tRNA pseudouridine synthase A from Xylella fastidiosa (strain M12).